We begin with the raw amino-acid sequence, 263 residues long: Lens fiber major intrinsic protein (263 aa).

Over 1 to 9 the chain is Cytoplasmic; sequence MWELRSASF. The chain crosses the membrane as a helical span at residues 10–29; that stretch reads WRAIFAEFFATLFYVFFGLG. Residues 30–41 lie on the Extracellular side of the membrane; sequence ASLRWAPGPLHV. Residues 42-59 traverse the membrane as a helical segment; it reads LQVALAFGLALATLVQTV. Over 60–61 the chain is Cytoplasmic; sequence GH. An intramembrane region (discontinuously helical) is located at residues 62–77; that stretch reads ISGAHVNPAVTFAFLV. The NPA 1 signature appears at 68 to 70; it reads NPA. The Cytoplasmic portion of the chain corresponds to 78–82; sequence GSQMS. The helical transmembrane segment at 83–106 threads the bilayer; it reads LLRAFCYIAAQLLGAVAGAAVLYS. The Extracellular portion of the chain corresponds to 107 to 127; sequence VTPPAVRGNLALNTLHAGVSV. Residues 128–148 traverse the membrane as a helical segment; the sequence is GQATTVEIFLTLQFVLCIFAT. Residues 149–156 lie on the Cytoplasmic side of the membrane; the sequence is YDERRNGR. Residues 157-175 form a helical membrane-spanning segment; sequence MGSVALAVGFSLTLGHLFG. Residues 176–178 are Extracellular-facing; the sequence is MYY. Residues 179-193 constitute an intramembrane region (discontinuously helical); the sequence is TGAGMNPARSFAPAI. Residues 184–186 carry the NPA 2 motif; that stretch reads NPA. Residues 194–200 are Extracellular-facing; that stretch reads LTRNFSN. Residues 201–222 traverse the membrane as a helical segment; sequence HWVYWVGPIIGGGLGSLLYDFL. The Cytoplasmic segment spans residues 223-263; it reads LFPRLKSVSERLSILKGARPSDSNGQPEGTGEPVELKTQAL. Residues 227–237 are interaction with CALM; it reads LKSVSERLSIL. Phosphoserine occurs at positions 235, 243, and 245. Positions 240–263 are disordered; the sequence is ARPSDSNGQPEGTGEPVELKTQAL. Asn246 is modified (deamidated asparagine).

This sequence belongs to the MIP/aquaporin (TC 1.A.8) family. Homotetramer; each monomer provides an independent water pore. Two homotetramers on opposing membranes can dimerize, forming a cell-cell junction. Interacts with CALM; the calcium-calmodulin/CALM complex interacts with the cytoplasmic domains of two aquaporins, leading to channel closure. Interacts with BFSP1 (via C-terminus); prevents calcium-dependent inhibition of the water channel activity. In terms of processing, subject to partial proteolytic cleavage in the eye lens core. Partial proteolysis promotes interactions between tetramers from adjoining membranes. Post-translationally, fatty acylated at Met-1 and Lys-238. The acyl modifications, in decreasing order of ion abundance, are: oleoyl (C18:1) &gt; palmitoyl (C16:0) &gt; stearoyl (C18:0) &gt; eicosenoyl (C20:1) &gt; dihomo-gamma-linolenoyl (C20:3) &gt; palmitoleoyl (C16:1) &gt; eicosadienoyl (C20:2).

It is found in the cell membrane. The protein localises to the cell junction. The enzyme catalyses H2O(in) = H2O(out). The water channel activity is inhibited by calcium through calmodulin/CALM. Aquaporins form homotetrameric transmembrane channels, with each monomer independently mediating water transport across the plasma membrane along its osmotic gradient. Specifically expressed in lens fiber cells, this aquaporin is crucial for maintaining lens water homeostasis and transparency. Beyond water permeability, it also acts as a cell-to-cell adhesion molecule, forming thin junctions between lens fiber cells that are essential for maintaining the ordered structure and transparency of the lens. This is Lens fiber major intrinsic protein from Mus musculus (Mouse).